We begin with the raw amino-acid sequence, 157 residues long: SsrA-binding protein (157 aa).

Residues 133–157 are disordered; it reads LHDKRESEKKRDWGREKGRLLRARG. Over residues 135–151 the composition is skewed to basic and acidic residues; that stretch reads DKRESEKKRDWGREKGR.

It belongs to the SmpB family.

The protein localises to the cytoplasm. Functionally, required for rescue of stalled ribosomes mediated by trans-translation. Binds to transfer-messenger RNA (tmRNA), required for stable association of tmRNA with ribosomes. tmRNA and SmpB together mimic tRNA shape, replacing the anticodon stem-loop with SmpB. tmRNA is encoded by the ssrA gene; the 2 termini fold to resemble tRNA(Ala) and it encodes a 'tag peptide', a short internal open reading frame. During trans-translation Ala-aminoacylated tmRNA acts like a tRNA, entering the A-site of stalled ribosomes, displacing the stalled mRNA. The ribosome then switches to translate the ORF on the tmRNA; the nascent peptide is terminated with the 'tag peptide' encoded by the tmRNA and targeted for degradation. The ribosome is freed to recommence translation, which seems to be the essential function of trans-translation. The protein is SsrA-binding protein of Bradyrhizobium sp. (strain BTAi1 / ATCC BAA-1182).